A 204-amino-acid polypeptide reads, in one-letter code: Casparian strip membrane protein 2 (204 aa).

Topologically, residues 1–42 (MKNESTFIDVPAESSSAMKGKAPLIGVARDHTTSGSGGYNRG) are cytoplasmic. A helical membrane pass occupies residues 43–63 (LAIFDFLLRLAAIVAALAAAA). At 64–92 (TMGTSDETLPFFTQFLQFEASYDDLPTFQ) the chain is on the extracellular side. A helical membrane pass occupies residues 93–113 (FFVIAMALVGGYLVLSLPISV). At 114–125 (VTILRPLATAPR) the chain is on the cytoplasmic side. Residues 126 to 146 (LLLLVLDTGVLALNTAAASSA) traverse the membrane as a helical segment. Over 147–178 (AAISYLAHSGNQNTNWLPICQQFGDFCQKSSG) the chain is Extracellular. A helical membrane pass occupies residues 179-199 (AVVSAFVSVVFFTILVVISGV). Residues 200 to 204 (ALKRH) are Cytoplasmic-facing.

Belongs to the Casparian strip membrane proteins (CASP) family. In terms of assembly, homodimer and heterodimers with other CASP proteins. Interacts with CASP1, CASP3 and CASP4.

The protein localises to the cell membrane. Its function is as follows. Regulates membrane-cell wall junctions and localized cell wall deposition. Required for establishment of the Casparian strip membrane domain (CSD) and the subsequent formation of Casparian strips, a cell wall modification of the root endodermis that determines an apoplastic barrier between the intraorganismal apoplasm and the extraorganismal apoplasm and prevents lateral diffusion. In Arabidopsis thaliana (Mouse-ear cress), this protein is Casparian strip membrane protein 2 (CASP2).